The chain runs to 113 residues: Small ribosomal subunit protein bS6 (113 aa).

It belongs to the bacterial ribosomal protein bS6 family.

Its function is as follows. Binds together with bS18 to 16S ribosomal RNA. This chain is Small ribosomal subunit protein bS6, found in Flavobacterium psychrophilum (strain ATCC 49511 / DSM 21280 / CIP 103535 / JIP02/86).